A 227-amino-acid chain; its full sequence is Probable maleylacetoacetate isomerase 2 (227 aa).

The 84-residue stretch at 14–97 folds into the GST N-terminal domain; the sequence is IQPILYSYWR…YLEETRPQRP (84 aa). Glutathione-binding positions include 24–29, Q55, V69, 81–82, Q121, and 125–127; these read SSCSWR, ES, and NLI. A GST C-terminal domain is found at 102-222; sequence DVHKRAKVRE…HPSNQPDCPP (121 aa).

This sequence belongs to the GST superfamily. Zeta family. It depends on glutathione as a cofactor.

It is found in the cytoplasm. It catalyses the reaction 4-maleylacetoacetate = 4-fumarylacetoacetate. The catalysed reaction is RX + glutathione = an S-substituted glutathione + a halide anion + H(+). It functions in the pathway amino-acid degradation; L-phenylalanine degradation; acetoacetate and fumarate from L-phenylalanine: step 5/6. Catalyzes the glutathione dependent oxygenation of dichloroacetic acid to glyoxylic acid in vitro. Has no glutathione thioltransferase activity with 4-hydroxynonenal (4-HNE), adrenochrome, phenethyl isothiocyanate (PEITC), 5-hydroperoxyeicosatetraenoic acid ((5S)-HpETE), prostaglandin A2 (PGA2) or 2-hydroxyethyldisulfide (HED). The polypeptide is Probable maleylacetoacetate isomerase 2 (GstZ2) (Drosophila melanogaster (Fruit fly)).